The sequence spans 308 residues: Leucine-rich repeat-containing protein 59 (308 aa).

Residues 1–248 (MARANGRSQN…LARRQSRLRK (248 aa)) are Cytoplasmic-facing. 5 LRR repeats span residues 10–31 (NLRD…SEVP), 40–61 (KATA…FCNL), 63–84 (YIVR…FGRL), 86–107 (NLQH…FAQL), and 109–128 (SLKW…AKVA). Residues 154 to 223 (DHERELQRKL…NNNKKKAEEE (70 aa)) are a coiled coil. Composition is skewed to basic and acidic residues over residues 170–187 (KQRL…DREL), 194–203 (QQKERKRRDY), and 218–237 (KKAE…PKEK). The segment at 170 to 240 (KQRLEAQQRV…VPTPKEKKLA (71 aa)) is disordered. A helical transmembrane segment spans residues 249 to 269 (IACILLFGLMVALLGVVACRF). Topologically, residues 270-308 (TDLKTFEVCRSVNAVYKETLSALHSNPVLERFLQDPSSQ) are lumenal.

Interacts with SGO1.

The protein localises to the microsome membrane. Its subcellular location is the endoplasmic reticulum membrane. The protein resides in the nucleus envelope. In terms of biological role, required for nuclear import of FGF1. The sequence is that of Leucine-rich repeat-containing protein 59 (lrrc59) from Xenopus tropicalis (Western clawed frog).